Here is a 185-residue protein sequence, read N- to C-terminus: Protein GrpE (185 aa).

Residues 1-20 are compositionally biased toward basic and acidic residues; sequence MSQEKKEELQSEAQVTKEET. The disordered stretch occupies residues 1-28; that stretch reads MSQEKKEELQSEAQVTKEETPQANEAAA.

The protein belongs to the GrpE family. In terms of assembly, homodimer.

It localises to the cytoplasm. Functionally, participates actively in the response to hyperosmotic and heat shock by preventing the aggregation of stress-denatured proteins, in association with DnaK and GrpE. It is the nucleotide exchange factor for DnaK and may function as a thermosensor. Unfolded proteins bind initially to DnaJ; upon interaction with the DnaJ-bound protein, DnaK hydrolyzes its bound ATP, resulting in the formation of a stable complex. GrpE releases ADP from DnaK; ATP binding to DnaK triggers the release of the substrate protein, thus completing the reaction cycle. Several rounds of ATP-dependent interactions between DnaJ, DnaK and GrpE are required for fully efficient folding. In Sulfurimonas denitrificans (strain ATCC 33889 / DSM 1251) (Thiomicrospira denitrificans (strain ATCC 33889 / DSM 1251)), this protein is Protein GrpE.